A 206-amino-acid polypeptide reads, in one-letter code: Ras-related protein Rab-18 (206 aa).

Methionine 1 carries the post-translational modification N-acetylmethionine. Positions 17, 20, 21, 22, 23, 34, 35, 40, 66, 123, and 125 each coordinate GTP. Residue serine 22 coordinates Mg(2+). 2 consecutive short sequence motifs (switch) follow at residues 31-45 (DTFD…GVDF) and 63-80 (DTAG…YYRG). Threonine 40 contacts Mg(2+). Position 144 is a phosphoserine (serine 144). Alanine 152 provides a ligand contact to GTP. Cysteine 199 is lipidated: S-palmitoyl cysteine. Residue cysteine 203 is modified to Cysteine methyl ester. Cysteine 203 carries the S-geranylgeranyl cysteine lipid modification. Residues 204–206 (SVL) constitute a propeptide, removed in mature form.

It belongs to the small GTPase superfamily. Rab family. As to quaternary structure, interacts (in GTP-bound form) with ZFYVE1. Interacts with ZW10 and this interaction is enhanced in the presence of ZFYVE1. Interacts with BSCL2. Mg(2+) serves as cofactor.

The protein localises to the endoplasmic reticulum membrane. It is found in the golgi apparatus. The protein resides in the cis-Golgi network membrane. Its subcellular location is the lipid droplet. It localises to the apical cell membrane. It catalyses the reaction GTP + H2O = GDP + phosphate + H(+). With respect to regulation, regulated by guanine nucleotide exchange factors (GEFs) which promote the exchange of bound GDP for free GTP. Regulated by GTPase activating proteins (GAPs) which increase the GTP hydrolysis activity at the ER membrane. Inhibited by GDP dissociation inhibitors (GDIs) which prevent Rab-GDP dissociation. In terms of biological role, the small GTPases Rab are key regulators of intracellular membrane trafficking, from the formation of transport vesicles to their fusion with membranes. Rabs cycle between an inactive GDP-bound form and an active GTP-bound form that is able to recruit to membranes different sets of downstream effectors directly responsible for vesicle formation, movement, tethering and fusion. RAB18 is required for the localization of ZFYVE1 to lipid droplets and for its function in mediating the formation of endoplasmic reticulum-lipid droplets (ER-LD) contacts. Also required for maintaining endoplasmic reticulum structure. Plays a role in apical endocytosis/recycling. Plays a key role in eye and brain development and neurodegeneration. The sequence is that of Ras-related protein Rab-18 (RAB18) from Bos taurus (Bovine).